Consider the following 263-residue polypeptide: Lens fiber major intrinsic protein (263 aa).

Over 1–9 (MWELRSASF) the chain is Cytoplasmic. The chain crosses the membrane as a helical span at residues 10-29 (WRAIFAEFFATLFYVFFGLG). Over 30–41 (ASLRWAPGPLHV) the chain is Extracellular. A helical transmembrane segment spans residues 42 to 59 (LQVALAFGLALATLVQTV). Over 60-61 (GH) the chain is Cytoplasmic. Positions 62–77 (ISGAHVNPAVTFAFLV) form an intramembrane region, discontinuously helical. The short motif at 68-70 (NPA) is the NPA 1 element. At 78-82 (GSQMS) the chain is on the cytoplasmic side. A helical membrane pass occupies residues 83–106 (LLRAFCYIAAQLLGAVAGAAVLYS). Topologically, residues 107–127 (VTPPAVRGNLALNTLHAGVSV) are extracellular. The chain crosses the membrane as a helical span at residues 128–148 (GQATTVEIFLTLQFVLCIFAT). The Cytoplasmic segment spans residues 149 to 156 (YDERRNGR). A helical membrane pass occupies residues 157 to 175 (MGSVALAVGFSLTLGHLFG). Over 176–178 (MYY) the chain is Extracellular. An intramembrane region (discontinuously helical) is located at residues 179–193 (TGAGMNPARSFAPAI). The NPA 2 signature appears at 184–186 (NPA). The Extracellular segment spans residues 194-200 (LTRNFSN). A helical transmembrane segment spans residues 201–222 (HWVYWVGPIIGGGLGSLLYDFL). The Cytoplasmic segment spans residues 223–263 (LFPRLKSVSERLSILKGARPSDSNGQPEGTGEPVELKTQAL). The tract at residues 227–237 (LKSVSERLSIL) is interaction with CALM. A phosphoserine mark is found at S235, S243, and S245. Positions 240-263 (ARPSDSNGQPEGTGEPVELKTQAL) are disordered. A Deamidated asparagine modification is found at N246.

This sequence belongs to the MIP/aquaporin (TC 1.A.8) family. Homotetramer; each monomer provides an independent water pore. Two homotetramers on opposing membranes can dimerize, forming a cell-cell junction. Interacts with CALM; the calcium-calmodulin/CALM complex interacts with the cytoplasmic domains of two aquaporins, leading to channel closure. Interacts with BFSP1 (via C-terminus); prevents calcium-dependent inhibition of the water channel activity. Post-translationally, subject to partial proteolytic cleavage in the eye lens core. Partial proteolysis promotes interactions between tetramers from adjoining membranes. Fatty acylated at Met-1 and Lys-238. The acyl modifications, in decreasing order of ion abundance, are: oleoyl (C18:1) &gt; palmitoyl (C16:0) &gt; stearoyl (C18:0) &gt; eicosenoyl (C20:1) &gt; dihomo-gamma-linolenoyl (C20:3) &gt; palmitoleoyl (C16:1) &gt; eicosadienoyl (C20:2).

Its subcellular location is the cell membrane. It localises to the cell junction. The catalysed reaction is H2O(in) = H2O(out). With respect to regulation, the water channel activity is inhibited by calcium through calmodulin/CALM. In terms of biological role, aquaporins form homotetrameric transmembrane channels, with each monomer independently mediating water transport across the plasma membrane along its osmotic gradient. Specifically expressed in lens fiber cells, this aquaporin is crucial for maintaining lens water homeostasis and transparency. Beyond water permeability, it also acts as a cell-to-cell adhesion molecule, forming thin junctions between lens fiber cells that are essential for maintaining the ordered structure and transparency of the lens. The sequence is that of Lens fiber major intrinsic protein from Mus musculus (Mouse).